We begin with the raw amino-acid sequence, 490 residues long: Bifunctional pantoate ligase/cytidylate kinase (490 aa).

Position 1-8 (1-8) interacts with ATP; sequence MGGLHQGH. The tract at residues 1–253 is pantoate--beta-alanine ligase; that stretch reads MGGLHQGHAR…CGETRLIDHV (253 aa). The active-site Proton donor is the His-8. Gln-35 provides a ligand contact to (R)-pantoate. Residue Gln-35 participates in beta-alanine binding. 124 to 127 contacts ATP; that stretch reads GEKD. Residue Gln-130 participates in (R)-pantoate binding. Residues Val-153 and 161-164 each bind ATP; that span reads ASSR. Residues 254-490 are cytidylate kinase; the sequence is FIMTRSPIVA…AKEIWPTPQG (237 aa).

It in the N-terminal section; belongs to the pantothenate synthetase family. In the C-terminal section; belongs to the cytidylate kinase family. Type 1 subfamily.

The protein resides in the cytoplasm. It catalyses the reaction (R)-pantoate + beta-alanine + ATP = (R)-pantothenate + AMP + diphosphate + H(+). The catalysed reaction is CMP + ATP = CDP + ADP. It carries out the reaction dCMP + ATP = dCDP + ADP. Its pathway is cofactor biosynthesis; (R)-pantothenate biosynthesis; (R)-pantothenate from (R)-pantoate and beta-alanine: step 1/1. In terms of biological role, catalyzes the condensation of pantoate with beta-alanine in an ATP-dependent reaction via a pantoyl-adenylate intermediate. Catalyzes the transfer of a phosphate group from ATP to either CMP or dCMP to form CDP or dCDP and ADP, respectively. The protein is Bifunctional pantoate ligase/cytidylate kinase of Synechococcus sp. (strain WH7803).